Here is a 432-residue protein sequence, read N- to C-terminus: Probable pectate lyase 22 (432 aa).

Residues 1 to 45 (MFRPNSLLIPSNLSTTKSQRNTMLNSSYLSFALIFFCCILFSALA) form the signal peptide. Asn65 carries an N-linked (GlcNAc...) asparagine glycan. Ca(2+)-binding residues include Asp228, Asp252, and Asp256. The active site involves Arg308.

It belongs to the polysaccharide lyase 1 family. It depends on Ca(2+) as a cofactor.

The enzyme catalyses Eliminative cleavage of (1-&gt;4)-alpha-D-galacturonan to give oligosaccharides with 4-deoxy-alpha-D-galact-4-enuronosyl groups at their non-reducing ends.. Its pathway is glycan metabolism; pectin degradation; 2-dehydro-3-deoxy-D-gluconate from pectin: step 2/5. In Arabidopsis thaliana (Mouse-ear cress), this protein is Probable pectate lyase 22.